The chain runs to 274 residues: Long chain fatty acid elongase 2 (274 aa).

Transmembrane regions (helical) follow at residues methionine 29–phenylalanine 49, phenylalanine 73–methionine 93, phenylalanine 115–valine 135, proline 140–tyrosine 160, serine 170–leucine 190, phenylalanine 201–valine 221, and valine 238–tyrosine 258.

Belongs to the ELO family. Expressed in various tissues and parts of the body, including the ventral cord, pharyngeal muscles, uterus, and the tail, and most strongly in intestinal cells.

It is found in the membrane. It carries out the reaction hexadecanoyl-CoA + malonyl-CoA + H(+) = 3-oxooctadecanoyl-CoA + CO2 + CoA. It participates in lipid metabolism; fatty acid biosynthesis. Catalyzes the first and rate-limiting reaction of the four reactions that constitute the long-chain fatty acids elongation cycle. Uses malonyl-CoA to add 2 carbons per cycle to the chain of long-chain fatty acids. Condensing enzyme responsible for the elongation of palmitate (hexadecanoate, 16:0), also involved in polyunsaturated fatty acid (PUFA) biosynthesis. The sequence is that of Long chain fatty acid elongase 2 from Caenorhabditis elegans.